Reading from the N-terminus, the 1070-residue chain is DNA-directed RNA polymerase subunit beta (1070 aa).

It belongs to the RNA polymerase beta chain family. In terms of assembly, in plastids the minimal PEP RNA polymerase catalytic core is composed of four subunits: alpha, beta, beta', and beta''. When a (nuclear-encoded) sigma factor is associated with the core the holoenzyme is formed, which can initiate transcription.

It is found in the plastid. The protein resides in the chloroplast. The catalysed reaction is RNA(n) + a ribonucleoside 5'-triphosphate = RNA(n+1) + diphosphate. In terms of biological role, DNA-dependent RNA polymerase catalyzes the transcription of DNA into RNA using the four ribonucleoside triphosphates as substrates. The chain is DNA-directed RNA polymerase subunit beta from Phaseolus vulgaris (Kidney bean).